Consider the following 256-residue polypeptide: Imidazole glycerol phosphate synthase subunit HisF (256 aa).

Residues Asp-11 and Asp-130 contribute to the active site.

The protein belongs to the HisA/HisF family. As to quaternary structure, heterodimer of HisH and HisF.

The protein localises to the cytoplasm. The catalysed reaction is 5-[(5-phospho-1-deoxy-D-ribulos-1-ylimino)methylamino]-1-(5-phospho-beta-D-ribosyl)imidazole-4-carboxamide + L-glutamine = D-erythro-1-(imidazol-4-yl)glycerol 3-phosphate + 5-amino-1-(5-phospho-beta-D-ribosyl)imidazole-4-carboxamide + L-glutamate + H(+). The protein operates within amino-acid biosynthesis; L-histidine biosynthesis; L-histidine from 5-phospho-alpha-D-ribose 1-diphosphate: step 5/9. In terms of biological role, IGPS catalyzes the conversion of PRFAR and glutamine to IGP, AICAR and glutamate. The HisF subunit catalyzes the cyclization activity that produces IGP and AICAR from PRFAR using the ammonia provided by the HisH subunit. The sequence is that of Imidazole glycerol phosphate synthase subunit HisF from Thioalkalivibrio sulfidiphilus (strain HL-EbGR7).